Reading from the N-terminus, the 146-residue chain is MGLTAHDRQLINSTWGKVCAKTIGKEALGRLLWTYPWTQRYFSSFGNLNSADAVFHNEAVAAHGEKVVTSIGEAIKHMDDIKGYYAQLSKYHSETLHVDPCNFKRFGGCLSISLARQFHEEYTPELHAAYEHLFDAIADALGKGYH.

In terms of domain architecture, Globin spans 2 to 146; it reads GLTAHDRQLI…IADALGKGYH (145 aa). Heme b-binding residues include histidine 63 and histidine 92.

It belongs to the globin family. Heterotetramer of two alpha chains and two beta chains. In terms of tissue distribution, red blood cells.

In terms of biological role, involved in oxygen transport from the lung to the various peripheral tissues. This Xenopus borealis (Kenyan clawed frog) protein is Hemoglobin subunit beta-1 (hbb1).